The following is a 589-amino-acid chain: EZH inhibitory protein (589 aa).

Disordered regions lie at residues 1–46 (MASS…LRLR), 61–548 (AGED…SGPN), and 561–589 (LDSS…KCRG). Composition is skewed to gly residues over residues 29-38 (GPRGRGGPSG) and 105-114 (PKGGGKADQG). The span at 147–161 (GAAGPPLPGARGSPA) shows a compositional bias: low complexity. Over residues 193-204 (LRSSTSQGSGST) the composition is skewed to polar residues. Low complexity-rich tracts occupy residues 299–308 (RSSASAVSPE), 325–334 (RSSASVVSPE), 351–360 (RSSASVVSPE), and 374–390 (PRAT…TTRS). The residue at position 306 (Ser-306) is a Phosphoserine. Residues 426-437 (MRLDLQVDREPE) show a composition bias toward basic and acidic residues. The segment covering 438 to 449 (SEAEQEEQELES) has biased composition (acidic residues). Residues 450–465 (EPGPSSRPQASRSSSR) are compositionally biased toward low complexity. Residues 482 to 490 (RRPVRMRAS) are sufficient for interaction with EZH2. Residues 484 to 503 (PVRMRASSPSPPGRLYPLPK) are necessary and sufficient for inhibition of PRC2/EED-EZH1 and PRC2/EED-EZH2 complex activity. The segment covering 509-547 (VHSPSSSSSESSSVSSSHSPLNKAPDPGSSPPLSSLSGP) has biased composition (low complexity). Residues 575–589 (AAPHTREEEDKKCRG) show a composition bias toward basic and acidic residues.

In terms of assembly, interacts with PRC2/EED-EZH1 complex member EZH1 and with PRC2/EED-EZH2 complex member EZH2; the interaction blocks EZH1/EZH2 methyltransferase activity. Interacts (via C-terminus) with SUZ12 which is a member of the PRC2/EED-EZH1 and PRC2/EED-EZH2 complexes. Highly expressed in ovary with lower expression in testis and very low levels in other tissues tested including prostate, brain, kidney, spleen and liver. During spermatogenesis, expressed mainly in spermatogonia with very low expression in spermatocytes I and II.

It is found in the nucleus. It localises to the cytoplasm. In terms of biological role, inhibits PRC2/EED-EZH1 and PRC2/EED-EZH2 complex function by inhibiting EZH1/EZH2 methyltransferase activity, thereby causing down-regulation of histone H3 trimethylation at 'Lys-27' (H3K27me3). Probably inhibits methyltransferase activity by limiting the stimulatory effect of cofactors such as AEBP2 and JARID2. Inhibits H3K27me3 deposition during spermatogenesis and oogenesis. This is EZH inhibitory protein from Mus musculus (Mouse).